A 384-amino-acid polypeptide reads, in one-letter code: tRNA-specific 2-thiouridylase MnmA (384 aa).

The tract at residues 1 to 26 is disordered; that stretch reads MDEGIRASGGIRACQTGKQKQGRKRP. ATP contacts are provided by residues 36-43 and Met-62; that span reads GMSGGVDS. The interval 122–124 is interaction with target base in tRNA; that stretch reads NPD. Catalysis depends on Cys-127, which acts as the Nucleophile. Cys-127 and Cys-223 are oxidised to a cystine. Gly-151 serves as a coordination point for ATP. Residues 173-175 are interaction with tRNA; sequence KDQ. The Cysteine persulfide intermediate role is filled by Cys-223. Positions 334 to 335 are interaction with tRNA; sequence RY.

It belongs to the MnmA/TRMU family.

The protein localises to the cytoplasm. The enzyme catalyses S-sulfanyl-L-cysteinyl-[protein] + uridine(34) in tRNA + AH2 + ATP = 2-thiouridine(34) in tRNA + L-cysteinyl-[protein] + A + AMP + diphosphate + H(+). In terms of biological role, catalyzes the 2-thiolation of uridine at the wobble position (U34) of tRNA, leading to the formation of s(2)U34. The polypeptide is tRNA-specific 2-thiouridylase MnmA (Chromobacterium violaceum (strain ATCC 12472 / DSM 30191 / JCM 1249 / CCUG 213 / NBRC 12614 / NCIMB 9131 / NCTC 9757 / MK)).